A 313-amino-acid polypeptide reads, in one-letter code: Protein ABA AND ROS SENSITIVE 1 (313 aa).

A Nuclear localization signal 1 motif is present at residues 5–12; that stretch reads AKKKAMFR. The C2H2-type zinc finger occupies 39-61; it reads CRVCNVVLKSESLWDVHQASRKH. The segment covering 115 to 131 has biased composition (basic and acidic residues); sequence ARAEVEPAKSKNLEQSK. 3 disordered regions span residues 115-189, 232-254, and 271-313; these read ARAE…LPTG, MEEEEVDAAETIEEEEQREQRSY, and ARLA…AQHL. Positions 155–176 are enriched in polar residues; sequence TDSSNTKTTSEPKQSQTQTTGP. The span at 232–248 shows a compositional bias: acidic residues; it reads MEEEEVDAAETIEEEEQ. Positions 232–271 form a coiled coil; sequence MEEEEVDAAETIEEEEQREQRSYKEKVEILKRKKMELKAA. Residues 274–281 carry the Nuclear localization signal 2 motif; that stretch reads AKRSKTSE. The segment covering 293 to 305 has biased composition (acidic residues); sequence ESPSDEEDDEDSA.

In terms of tissue distribution, mostly expressed in siliques and, to a lower extent, in roots. Barely deteclable in leaves and stems.

Its subcellular location is the nucleus. The protein localises to the cytoplasm. In terms of biological role, essential for breaking seed dormancy before seed germination. Prevents reactive oxygen species (ROS) accumulation in response to abscisic acid (ABA) and oxidative stress, probably by repressing the accumulation of ABA-induced ROS-scavenging enzymes (e.g. CSD3). This is Protein ABA AND ROS SENSITIVE 1 from Arabidopsis thaliana (Mouse-ear cress).